Reading from the N-terminus, the 114-residue chain is Cytochrome c2 (114 aa).

At Q1 the chain carries Pyrrolidone carboxylic acid. Residues C13, C16, H17, and M93 each contribute to the heme c site.

It belongs to the cytochrome c family. Post-translationally, binds 1 heme c group covalently per subunit.

Cytochrome c2 is found mainly in purple, non-sulfur, photosynthetic bacteria where it functions as the electron donor to the oxidized bacteriochlorophyll in the photophosphorylation pathway. However, it may also have a role in the respiratory chain and is found in some non-photosynthetic bacteria. The sequence is that of Cytochrome c2 (cycA) from Rhodopseudomonas palustris.